The following is a 157-amino-acid chain: Transcriptional repressor NrdR (157 aa).

Residues 3 to 34 (CPFCGHAESQVKDSRPSEDGAAIRRRRMCPEC) fold into a zinc finger. The 91-residue stretch at 49–139 (LIIVKRSGRR…VYRDFKETSD (91 aa)) folds into the ATP-cone domain.

This sequence belongs to the NrdR family. Zn(2+) serves as cofactor.

In terms of biological role, negatively regulates transcription of bacterial ribonucleotide reductase nrd genes and operons by binding to NrdR-boxes. This is Transcriptional repressor NrdR from Caulobacter vibrioides (strain ATCC 19089 / CIP 103742 / CB 15) (Caulobacter crescentus).